We begin with the raw amino-acid sequence, 161 residues long: Protein-export protein SecB (161 aa).

The tract at residues 141–161 is disordered; that stretch reads KKQQETAGEQPDQPADTITRH.

This sequence belongs to the SecB family. Homotetramer, a dimer of dimers. One homotetramer interacts with 1 SecA dimer.

Its subcellular location is the cytoplasm. Its function is as follows. One of the proteins required for the normal export of preproteins out of the cell cytoplasm. It is a molecular chaperone that binds to a subset of precursor proteins, maintaining them in a translocation-competent state. It also specifically binds to its receptor SecA. This Nitrosomonas europaea (strain ATCC 19718 / CIP 103999 / KCTC 2705 / NBRC 14298) protein is Protein-export protein SecB.